A 121-amino-acid polypeptide reads, in one-letter code: MYIKAALLIVVLFGVASQITSALYLKQADFDDPRMFTSSFGKRSAIESEPQAYPKSYRAIRIQRRSMDDLDDPRLMTMSFGKRMILPSLADLHRYTMYDKRGSDIDDPRYFLFSNRLTCRC.

The first 22 residues, 1–22 (MYIKAALLIVVLFGVASQITSA), serve as a signal peptide directing secretion.

May regulate lifespan in response to food availability and oxidative stress. The sequence is that of Neuropeptide-like protein 7 from Caenorhabditis elegans.